The chain runs to 159 residues: 2-C-methyl-D-erythritol 2,4-cyclodiphosphate synthase (159 aa).

2 residues coordinate a divalent metal cation: Asp8 and His10. 4-CDP-2-C-methyl-D-erythritol 2-phosphate is bound by residues 8–10 and 34–35; these read DVH and HS. His42 contacts a divalent metal cation. 4-CDP-2-C-methyl-D-erythritol 2-phosphate contacts are provided by residues 56–58, 61–65, 100–106, 132–135, Phe139, and Arg142; these read DIG, FPDTD, AQAPKML, and TTTE.

The protein belongs to the IspF family. Homotrimer. A divalent metal cation is required as a cofactor.

The catalysed reaction is 4-CDP-2-C-methyl-D-erythritol 2-phosphate = 2-C-methyl-D-erythritol 2,4-cyclic diphosphate + CMP. Its pathway is isoprenoid biosynthesis; isopentenyl diphosphate biosynthesis via DXP pathway; isopentenyl diphosphate from 1-deoxy-D-xylulose 5-phosphate: step 4/6. In terms of biological role, involved in the biosynthesis of isopentenyl diphosphate (IPP) and dimethylallyl diphosphate (DMAPP), two major building blocks of isoprenoid compounds. Catalyzes the conversion of 4-diphosphocytidyl-2-C-methyl-D-erythritol 2-phosphate (CDP-ME2P) to 2-C-methyl-D-erythritol 2,4-cyclodiphosphate (ME-CPP) with a corresponding release of cytidine 5-monophosphate (CMP). This is 2-C-methyl-D-erythritol 2,4-cyclodiphosphate synthase from Citrobacter koseri (strain ATCC BAA-895 / CDC 4225-83 / SGSC4696).